The chain runs to 144 residues: Transmembrane protein 170A (144 aa).

Topologically, residues 1-50 (MEREGSGGGGGSAGLLQQILSLKLVPRVGNGTLCPNSTSLCSFPEMWYGV) are extracellular. N-linked (GlcNAc...) asparagine glycosylation is found at N30 and N36. The helical transmembrane segment at 51 to 71 (FLWALMSSVFFHVPAGLLALF) threads the bilayer. Residues 72-85 (TLRHHKYGRFMSVS) lie on the Cytoplasmic side of the membrane. A helical membrane pass occupies residues 86–106 (ILLMGIVGPITAGILTSAAIA). Residues 107–116 (GVYRAAGKEM) are Extracellular-facing. The helical transmembrane segment at 117 to 137 (IPFEALTLGTGQTFCVVVVSF) threads the bilayer. Over 138 to 144 (LRVLATL) the chain is Cytoplasmic.

It belongs to the TMEM170 family. Interacts with RTN4.

It is found in the endoplasmic reticulum membrane. It localises to the nucleus envelope. In terms of biological role, acts as a regulator of endoplasmic reticulum (ER) and nuclear envelope (NE) morphogenesis. Affects the ratio between tubular ER and ER sheets by promoting sheet formation at the expense of tubules. Influences NE expansion, nuclear pore complex formation and proper localization of inner nuclear membrane proteins. The chain is Transmembrane protein 170A (Tmem170a) from Mus musculus (Mouse).